The chain runs to 108 residues: Transmembrane protein 141 (108 aa).

2 consecutive transmembrane segments (helical) span residues M32–I52 and Y58–V78.

Belongs to the TMEM141 family.

It localises to the membrane. In Homo sapiens (Human), this protein is Transmembrane protein 141 (TMEM141).